Reading from the N-terminus, the 75-residue chain is Small ribosomal subunit protein bS16 (75 aa).

It belongs to the bacterial ribosomal protein bS16 family.

In Campylobacter fetus subsp. fetus (strain 82-40), this protein is Small ribosomal subunit protein bS16.